Reading from the N-terminus, the 155-residue chain is uncharacterized protein (155 aa).

An N-acetyltransferase domain is found at 7-154; sequence LQINYKTLEE…VWLPESVELQ (148 aa).

This is an uncharacterized protein from Brevibacillus brevis (strain 47 / JCM 6285 / NBRC 100599).